The primary structure comprises 94 residues: Neutrophil antibiotic peptide NP-1 (94 aa).

Residues 1-19 (MRTLTLLTALLLLALHTQA) form the signal peptide. Positions 20 to 62 (KSPQGTAEEAPDQEQLVMEDQDISISFGGDKGTALQDADVKAG) are excised as a propeptide. Intrachain disulfides connect cysteine 65–cysteine 93, cysteine 67–cysteine 82, and cysteine 72–cysteine 92. Position 84 is a phosphotyrosine (tyrosine 84).

The protein belongs to the alpha-defensin family. Highest expression in bone marrow and to a much lesser extent in small intestine.

It is found in the secreted. Active in vitro against S.aureus, fungi, Gram-positive and Gram-negative bacteria and to a lesser extent against an enveloped virus. The sequence is that of Neutrophil antibiotic peptide NP-1 from Rattus norvegicus (Rat).